The chain runs to 449 residues: Tubulin alpha-8 chain (449 aa).

Positions 1-4 (MREC) match the MREC motif motif. GTP contacts are provided by glutamine 11, glutamate 71, serine 140, glycine 144, threonine 145, threonine 179, asparagine 206, and asparagine 228. Glutamate 71 is a binding site for Mg(2+). Glutamate 254 is a catalytic residue.

The protein belongs to the tubulin family. Dimer of alpha and beta chains. A typical microtubule is a hollow water-filled tube with an outer diameter of 25 nm and an inner diameter of 15 nM. Alpha-beta heterodimers associate head-to-tail to form protofilaments running lengthwise along the microtubule wall with the beta-tubulin subunit facing the microtubule plus end conferring a structural polarity. Microtubules usually have 13 protofilaments but different protofilament numbers can be found in some organisms and specialized cells. Requires Mg(2+) as cofactor. Post-translationally, some glutamate residues at the C-terminus are polyglycylated, resulting in polyglycine chains on the gamma-carboxyl group. Glycylation is mainly limited to tubulin incorporated into axonemes (cilia and flagella) whereas glutamylation is prevalent in neuronal cells, centrioles, axonemes, and the mitotic spindle. Both modifications can coexist on the same protein on adjacent residues, and lowering polyglycylation levels increases polyglutamylation, and reciprocally. Cilia and flagella glycylation is required for their stability and maintenance. Flagella glycylation controls sperm motility. Some glutamate residues at the C-terminus are polyglutamylated, resulting in polyglutamate chains on the gamma-carboxyl group. Polyglutamylation plays a key role in microtubule severing by spastin (SPAST). SPAST preferentially recognizes and acts on microtubules decorated with short polyglutamate tails: severing activity by SPAST increases as the number of glutamates per tubulin rises from one to eight, but decreases beyond this glutamylation threshold. Glutamylation is also involved in cilia motility. In terms of processing, the C-terminal phenylalanine residue is cleaved by MATCAP1/KIAA0895L. In terms of tissue distribution, expressed at highest levels in the testis, followed by skeletal and heart muscle. Expressed at low levels in the developing brain.

The protein localises to the cytoplasm. It is found in the cytoskeleton. The catalysed reaction is GTP + H2O = GDP + phosphate + H(+). Tubulin is the major constituent of microtubules, a cylinder consisting of laterally associated linear protofilaments composed of alpha- and beta-tubulin heterodimers. Microtubules grow by the addition of GTP-tubulin dimers to the microtubule end, where a stabilizing cap forms. Below the cap, tubulin dimers are in GDP-bound state, owing to GTPase activity of alpha-tubulin. This is Tubulin alpha-8 chain (Tuba8) from Mus musculus (Mouse).